A 148-amino-acid chain; its full sequence is MGGKELSEEQVASMREAFSLFDTDGDGRIAPSELGVLMRSLGGNPTQAQLRDIAAQEKLTAPFDFPRFLDLMRAHLRPEPFDRPLRDAFRVLDKDASGTVSVADLRHVLTSIGEKLEPHEFDEWIREVDVAPDGTIRYDDFIRRIVAK.

EF-hand domains are found at residues 9–44 (EQVA…LGGN), 80–115 (PFDR…IGEK), and 116–148 (LEPH…IVAK). 10 residues coordinate Ca(2+): D22, D24, D26, R28, E33, D93, D95, S97, T99, and D104.

Its function is as follows. Potential calcium sensor. The protein is Probable calcium-binding protein CML7 (CML7) of Oryza sativa subsp. japonica (Rice).